We begin with the raw amino-acid sequence, 270 residues long: A-type potassium channel modulatory protein KCNIP2 (270 aa).

Residues 1-17 are compositionally biased toward basic and acidic residues; sequence MRGQGRKESLSDSRDLD. Positions 1–32 are disordered; it reads MRGQGRKESLSDSRDLDGSYDQLTGHPPGPTK. The residue at position 9 (Ser-9) is a Phosphoserine. 2 S-palmitoyl cysteine lipidation sites follow: Cys-45 and Cys-46. Positions 81 to 137 constitute an EF-hand 1; degenerate domain; sequence FELSTVCHRPEGLEQLQEQTKFTRKELQVLYRGFKNECPSGIVNEENFKQIYSQFFP. EF-hand domains follow at residues 140 to 175, 176 to 211, and 224 to 259; these read DSST…ILRG, TVDD…IYDM, and APRE…DENI. Asp-153, Asn-155, Asp-157, Ser-159, Asp-164, Asp-189, Asn-191, Asp-193, Cys-195, Glu-200, Asp-237, Asn-239, Asp-241, and Glu-248 together coordinate Ca(2+). Residues 257–270 are interaction with KCND2; the sequence is ENIMRSMQLFDNVI.

The protein belongs to the recoverin family. As to quaternary structure, component of heteromultimeric potassium channels. Identified in potassium channel complexes containing KCND1, KCND2, KCND3, KCNIP1, KCNIP2, KCNIP3, KCNIP4, DPP6 and DPP10. The KCND2-KCNIP2 channel complex contains four KCND2 and four KCNIP2 subunits. Interacts with KCND2. Probably part of a complex consisting of KCNIP1, KCNIP2 isoform 3 and KCND2. At least isoform 2 and isoform 3 can self-associate to form homodimers and homotetramers. Isoform 3 interacts with KCNIP1 in a calcium-dependent manner. Interacts with KCND3; each KCNIP2 monomer interacts with two adjacent KCND3 subunits, through both the N-terminal inactivation ball of a KCND3 subunit and a C-terminal helix from the adjacent KCND3 subunit, clamping them together; this interaction modulates the channel gating kinetics. Post-translationally, palmitoylated. Palmitoylation enhances association with the plasma membrane. As to expression, expressed in brain. Colocalizes with KCND2 in excitatory neurons including cortical and hippocampal CA1 pyramidal cells. Isoform 3 is expressed in heart and in umbilical vein endothelial cells. Not expressed in fetal heart.

Its subcellular location is the cell membrane. Its function is as follows. Regulatory subunit of Kv4/D (Shal)-type voltage-gated rapidly inactivating A-type potassium channels. Modulates channel density, inactivation kinetics and rate of recovery from inactivation in a calcium-dependent and isoform-specific manner. Involved in KCND2 and KCND3 trafficking to the cell surface. May be required for the expression of I(To) currents in the heart. In Homo sapiens (Human), this protein is A-type potassium channel modulatory protein KCNIP2.